The chain runs to 272 residues: Acetylglutamate kinase (272 aa).

Residues 46–47 (GA), R68, and N166 contribute to the substrate site.

It belongs to the acetylglutamate kinase family. ArgB subfamily.

The protein resides in the cytoplasm. It catalyses the reaction N-acetyl-L-glutamate + ATP = N-acetyl-L-glutamyl 5-phosphate + ADP. Its pathway is amino-acid biosynthesis; L-arginine biosynthesis; N(2)-acetyl-L-ornithine from L-glutamate: step 2/4. Its function is as follows. Catalyzes the ATP-dependent phosphorylation of N-acetyl-L-glutamate. This is Acetylglutamate kinase from Dehalococcoides mccartyi (strain ATCC BAA-2100 / JCM 16839 / KCTC 5957 / BAV1).